The following is a 37-amino-acid chain: Conotoxin r11e (37 aa).

Disulfide bonds link cysteine 2-cysteine 16, cysteine 9-cysteine 21, cysteine 15-cysteine 26, and cysteine 20-cysteine 33. A 4-carboxyglutamate mark is found at glutamate 13 and glutamate 14. Tryptophan 34 carries the 6'-bromotryptophan modification.

Expressed by the venom duct.

The protein localises to the secreted. Causes hyperactivity, circular motion, convulsion, urination and death, when injected into 13- to 15-day-old mice. Causes gasping, backward swimming or swimming in a vertical direction and death, when intraperitoneally injected into goldfish. This Conus radiatus (Rayed cone) protein is Conotoxin r11e.